We begin with the raw amino-acid sequence, 162 residues long: Interleukin-15 (162 aa).

The signal sequence occupies residues 1-29 (MRISKPHLRITSIQCYVCLLLNTHFLTEA). Positions 30 to 48 (GIRVFILGCISAGIPKTEA) are excised as a propeptide. 2 disulfide bridges follow: cysteine 83–cysteine 133 and cysteine 90–cysteine 136. N-linked (GlcNAc...) asparagine glycosylation is found at asparagine 119, asparagine 127, and asparagine 143.

This sequence belongs to the IL-15/IL-21 family.

The protein localises to the secreted. In terms of biological role, cytokine that plays a major role in the development of inflammatory and protective immune responses to microbial invaders and parasites by modulating immune cells of both the innate and adaptive immune systems. Stimulates the proliferation of natural killer cells, T-cells and B-cells and promotes the secretion of several cytokines. In monocytes, induces the production of IL8 and monocyte chemotactic protein 1/CCL2, two chemokines that attract neutrophils and monocytes respectively to sites of infection. Unlike most cytokines, which are secreted in soluble form, IL15 is expressed in association with its high affinity IL15RA on the surface of IL15-producing cells and delivers signals to target cells that express IL2RB and IL2RG receptor subunits. Binding to its receptor triggers the phosphorylation of JAK1 and JAK3 and the recruitment and subsequent phosphorylation of signal transducer and activator of transcription-3/STAT3 and STAT5. In mast cells, induces the rapid tyrosine phosphorylation of STAT6 and thereby controls mast cell survival and release of cytokines such as IL4. In Marmota monax (Woodchuck), this protein is Interleukin-15 (IL15).